Here is a 159-residue protein sequence, read N- to C-terminus: Putative ribosomal RNA large subunit methyltransferase H (159 aa).

Residues L76, G108, and 127–132 each bind S-adenosyl-L-methionine; that span reads LSAMTF.

Belongs to the RNA methyltransferase RlmH family.

The protein resides in the cytoplasm. It carries out the reaction pseudouridine(1915) in 23S rRNA + S-adenosyl-L-methionine = N(3)-methylpseudouridine(1915) in 23S rRNA + S-adenosyl-L-homocysteine + H(+). Specifically methylates the pseudouridine at position 1915 (m3Psi1915) in 23S rRNA. The polypeptide is Putative ribosomal RNA large subunit methyltransferase H (Methanospirillum hungatei JF-1 (strain ATCC 27890 / DSM 864 / NBRC 100397 / JF-1)).